Consider the following 181-residue polypeptide: Protein FAM237A (181 aa).

The first 33 residues, 1 to 33, serve as a signal peptide directing secretion; it reads MADPGNRGGIHRPLSFTCSLLIVGMCCVSPFFC. L113 is modified (leucine amide). A propeptide spans 114-181 (removed in the mature form); it reads GRRQLVGEEE…GKVNLEIKRK (68 aa).

Post-translationally, the active form requires C-terminal amidation and disulfide bond formation. In terms of tissue distribution, expressed in the pituitary, testis, and heart and at lower levels in the brain.

The protein resides in the secreted. In terms of biological role, may be capable of activating GPR83 via the GNAQ signaling pathway. In Homo sapiens (Human), this protein is Protein FAM237A.